The sequence spans 505 residues: Glycerol kinase 1 (505 aa).

An ADP-binding site is contributed by Thr-13. ATP contacts are provided by Thr-13, Thr-14, and Ser-15. Thr-13 contributes to the sn-glycerol 3-phosphate binding site. Arg-17 is an ADP binding site. Residues Arg-83, Glu-84, and Tyr-135 each contribute to the sn-glycerol 3-phosphate site. Residues Arg-83, Glu-84, and Tyr-135 each coordinate glycerol. His-231 carries the post-translational modification Phosphohistidine; by HPr. Asp-245 serves as a coordination point for sn-glycerol 3-phosphate. Glycerol is bound by residues Asp-245 and Gln-246. ADP contacts are provided by Thr-267 and Gly-310. ATP contacts are provided by Thr-267, Gly-310, Gln-314, and Gly-411. ADP-binding residues include Gly-411 and Asn-415.

Belongs to the FGGY kinase family. In terms of assembly, homotetramer and homodimer (in equilibrium). In terms of processing, the phosphoenolpyruvate-dependent sugar phosphotransferase system (PTS), including enzyme I, and histidine-containing protein (HPr) are required for the phosphorylation, which leads to the activation of the enzyme.

It carries out the reaction glycerol + ATP = sn-glycerol 3-phosphate + ADP + H(+). Its pathway is polyol metabolism; glycerol degradation via glycerol kinase pathway; sn-glycerol 3-phosphate from glycerol: step 1/1. Activated by phosphorylation and inhibited by fructose 1,6-bisphosphate (FBP). Key enzyme in the regulation of glycerol uptake and metabolism. Catalyzes the phosphorylation of glycerol to yield sn-glycerol 3-phosphate. The sequence is that of Glycerol kinase 1 from Lactiplantibacillus plantarum (strain ATCC BAA-793 / NCIMB 8826 / WCFS1) (Lactobacillus plantarum).